Here is a 280-residue protein sequence, read N- to C-terminus: Probable ketoamine kinase lp_1983 (280 aa).

87 to 89 serves as a coordination point for ATP; the sequence is DWL. Catalysis depends on D189, which acts as the Proton acceptor.

The protein belongs to the fructosamine kinase family.

The enzyme catalyses N(6)-(D-ribulosyl)-L-lysine + ATP = N(6)-(3-O-phospho-D-ribulosyl)-L-lysine + ADP + H(+). The catalysed reaction is N-(D-ribulosyl)-cadaverine + ATP = N-(3-O-phospho-D-ribulosyl)-cadaverine + ADP + H(+). It catalyses the reaction N(6)-(D-erythrulosyl)-L-lysine + ATP = N(6)-(3-O-phospho-D-erythrulosyl)-L-lysine + ADP + H(+). It carries out the reaction N-(D-erythrulosyl)-cadaverine + ATP = N-(3-O-phospho-D-erythrulosyl)-cadaverine + ADP + H(+). The enzyme catalyses N(6)-D-ribulosyl-L-lysyl-[protein] + ATP = N(6)-(3-O-phospho-D-ribulosyl)-L-lysyl-[protein] + ADP + H(+). The catalysed reaction is N(6)-(D-erythrulosyl)-L-lysyl-[protein] + ATP = N(6)-(3-O-phospho-D-erythrulosyl)-L-lysyl-[protein] + ADP + H(+). In terms of biological role, ketoamine kinase that phosphorylates ketoamines, such as erythruloselysine, erythrulosecadaverine, ribuloselysine and ribulosecadaverine, on the third carbon of the sugar moiety to generate ketoamine 3-phosphate. Has higher activity on free lysine (erythruloselysine and ribuloselysine), than on ribuloselysine and erythruloselysine residues on glycated proteins. The sequence is that of Probable ketoamine kinase lp_1983 from Lactiplantibacillus plantarum (strain ATCC BAA-793 / NCIMB 8826 / WCFS1) (Lactobacillus plantarum).